Here is a 255-residue protein sequence, read N- to C-terminus: Microfibril-associated glycoprotein 4 (255 aa).

An N-terminal signal peptide occupies residues 1–20 (MEALLVLPLLLLLSAGPCAP). The Cell attachment site motif lies at 26-28 (RGD). Positions 32–255 (KSCLQLPLDC…KRTEMKIRRA (224 aa)) constitute a Fibrinogen C-terminal domain. N-linked (GlcNAc...) asparagine glycosylation is found at Asn-87 and Asn-137.

Homodimer. Can also form higher oligomers. Interacts with FBN1, FBN2 and LOX. Interacts with COL1A1 in a Ca (2+)-dependent manner. Interacts with ELN in a Ca (2+)-dependent manner; this interaction promotes ELN self-assembly.

Its subcellular location is the secreted. It is found in the extracellular space. It localises to the extracellular matrix. Its function is as follows. Could be involved in calcium-dependent cell adhesion or intercellular interactions. May contribute to the elastic fiber assembly and/or maintenance. This Bos taurus (Bovine) protein is Microfibril-associated glycoprotein 4 (MFAP4).